Here is a 571-residue protein sequence, read N- to C-terminus: Proline--tRNA ligase (571 aa).

This sequence belongs to the class-II aminoacyl-tRNA synthetase family. ProS type 1 subfamily. As to quaternary structure, homodimer.

The protein localises to the cytoplasm. The catalysed reaction is tRNA(Pro) + L-proline + ATP = L-prolyl-tRNA(Pro) + AMP + diphosphate. Functionally, catalyzes the attachment of proline to tRNA(Pro) in a two-step reaction: proline is first activated by ATP to form Pro-AMP and then transferred to the acceptor end of tRNA(Pro). As ProRS can inadvertently accommodate and process non-cognate amino acids such as alanine and cysteine, to avoid such errors it has two additional distinct editing activities against alanine. One activity is designated as 'pretransfer' editing and involves the tRNA(Pro)-independent hydrolysis of activated Ala-AMP. The other activity is designated 'posttransfer' editing and involves deacylation of mischarged Ala-tRNA(Pro). The misacylated Cys-tRNA(Pro) is not edited by ProRS. The sequence is that of Proline--tRNA ligase from Pseudomonas aeruginosa (strain UCBPP-PA14).